We begin with the raw amino-acid sequence, 91 residues long: Small ribosomal subunit protein uS19 (91 aa).

The protein belongs to the universal ribosomal protein uS19 family.

Protein S19 forms a complex with S13 that binds strongly to the 16S ribosomal RNA. This chain is Small ribosomal subunit protein uS19, found in Saccharophagus degradans (strain 2-40 / ATCC 43961 / DSM 17024).